The primary structure comprises 84 residues: Cytochrome b559 subunit alpha (84 aa).

The helical transmembrane segment at 21–35 (VIHSITIPSLFIAGW) threads the bilayer. Position 23 (H23) interacts with heme.

The protein belongs to the PsbE/PsbF family. Heterodimer of an alpha subunit and a beta subunit. PSII is composed of 1 copy each of membrane proteins PsbA, PsbB, PsbC, PsbD, PsbE, PsbF, PsbH, PsbI, PsbJ, PsbK, PsbL, PsbM, PsbT, PsbX, PsbY, PsbZ, Psb30/Ycf12, at least 3 peripheral proteins of the oxygen-evolving complex and a large number of cofactors. It forms dimeric complexes. Heme b serves as cofactor.

The protein resides in the plastid membrane. Functionally, this b-type cytochrome is tightly associated with the reaction center of photosystem II (PSII). PSII is a light-driven water:plastoquinone oxidoreductase that uses light energy to abstract electrons from H(2)O, generating O(2) and a proton gradient subsequently used for ATP formation. It consists of a core antenna complex that captures photons, and an electron transfer chain that converts photonic excitation into a charge separation. The sequence is that of Cytochrome b559 subunit alpha from Cuscuta gronovii (Common dodder).